The following is a 1604-amino-acid chain: Collagen alpha-1(XVI) chain (1604 aa).

The N-terminal stretch at 1 to 21 (MWVSWAPGLWLLGLWATFGHG) is a signal peptide. Asn47 is a glycosylation site (N-linked (GlcNAc...) asparagine). One can recognise a Laminin G-like domain in the interval 50–231 (GFNLIHRLSL…LQQVHIYCDP (182 aa)). Positions 232–374 (ELVLEEGCCE…SPDAPLQCAE (143 aa)) are nonhelical region 10 (NC10). Residues 301 to 311 (AERGAKVHQET) show a composition bias toward basic and acidic residues. The tract at residues 301-509 (AERGAKVHQE…KGEKGDPCEV (209 aa)) is disordered. Residue Asn327 is glycosylated (N-linked (GlcNAc...) asparagine). A Collagen-like 1 domain is found at 375 to 423 (GPKGEKGESGALGPSGLPGSTGEKGQKGEKGDGGIKGVPGKPGRDGRPG). Residues 375–506 (GPKGEKGESG…PGVKGEKGDP (132 aa)) are triple-helical region 9 (COL9) with 3 imperfections. Residues 383–397 (SGALGPSGLPGSTGE) show a composition bias toward low complexity. A compositionally biased stretch (basic and acidic residues) spans 398 to 407 (KGQKGEKGDG). The span at 449 to 460 (PGPPGLPGPPGI) shows a compositional bias: pro residues. The span at 486 to 495 (GKEGPGGKPG) shows a compositional bias: gly residues. The segment at 507 to 521 (CEVCPTLPEGFQNFV) is nonhelical region 9 (NC9). The interval 522-555 (GLPGKPGPKGEPGDPVPARGDPGIQGIKGEKGEP) is triple-helical region 8 (COL8) with 1 imperfection. Positions 540 to 542 (RGD) match the Cell attachment site motif. The interval 556-572 (CLSCSSVVGAQHLVSST) is nonhelical region 8 (NC8). The tract at residues 573-631 (GASGDVGSPGFGLPGLPGRAGVPGLKGEKGNFGEAGPAGSPGPPGPVGPAGIKGAKGEP) is triple-helical region 7 (COL7) with 1 imperfection. Collagen-like domains follow at residues 573–633 (GASG…EPCE) and 667–721 (GLPG…GEKG). The interval 604-917 (FGEAGPAGSP…PPGIPGPPGP (314 aa)) is disordered. The tract at residues 632-652 (CEPCPALSNLQDGDVRVVALP) is nonhelical region 7 (NC7). The segment at 653-723 (GPSGEKGEPG…AGPKGEKGDG (71 aa)) is triple-helical region 6 (COL6) with 1 imperfection. A compositionally biased stretch (basic and acidic residues) spans 674 to 684 (KAGERGLKGQK). Low complexity predominate over residues 686 to 702 (DAGNPGDPGTPGTTGRP). The tract at residues 724 to 738 (CTACPSLQGTVTDMA) is nonhelical region 6 (NC6). The tract at residues 739–876 (GRPGQPGPKG…RGEKGEPGEC (138 aa)) is triple-helical region 5 (COL5) with 3 imperfections. 3 stretches are compositionally biased toward low complexity: residues 766–781 (LPGVQGPPGLKGVQGE), 792–808 (PQGEPGAPGLPGIQGLP), and 826–846 (PGVKGATGPVGPPGASVSGPP). The Collagen-like 4 domain maps to 788 to 840 (GVQGPQGEPGAPGLPGIQGLPGPRGPPGPTGEKGAQGSPGVKGATGPVGPPGA). The span at 864 to 873 (KGPRGEKGEP) shows a compositional bias: basic and acidic residues. The nonhelical region 5 (NC5) stretch occupies residues 877-887 (SCPSQGDLIFS). The region spanning 888 to 938 (GMPGAPGLWMGSSWQPGPQGPPGIPGPPGPPGVPGLQGVPGNNGLPGQPGL) is the Collagen-like 5 domain. A triple-helical region 4 (COL4) with 2 imperfections region spans residues 888-939 (GMPGAPGLWMGSSWQPGPQGPPGIPGPPGPPGVPGLQGVPGNNGLPGQPGLT). The segment covering 905 to 917 (PQGPPGIPGPPGP) has biased composition (pro residues). Residues 940–973 (AELGSLPIEQHLLKSICGDCVQGQRAHPGYLVEK) form a nonhelical region 4 (NC4) region. The interval 974-988 (GEKGDQGIPGVPGLD) is triple-helical region 3 (COL3). The nonhelical region 3 (NC3) stretch occupies residues 989–1011 (NCAQCFLSLERPRAEEARGDNSE). 2 disordered regions span residues 1001 to 1429 (RAEE…VPGS) and 1468 to 1517 (MAAA…PGTK). The short motif at 1006–1008 (RGD) is the Cell attachment site element. The triple-helical region 2 (COL2) with 2 imperfections stretch occupies residues 1012–1433 (GDPGCVGSPG…PGVPGSMGDM (422 aa)). In terms of domain architecture, Collagen-like 6 spans 1018-1075 (GSPGLPGPPGLPGQRGEEGPPGMRGSPGPPGPIGPPGFPGAVGSPGLPGLQGERGLTG). Pro residues-rich tracts occupy residues 1044–1055 (PGPPGPIGPPGF), 1160–1169 (FPGPPGPPGF), and 1199–1208 (SPGPPGPPGI). The segment covering 1217–1226 (LDGKDGKPGL) has biased composition (basic and acidic residues). The Cell attachment site signature appears at 1227–1229 (RGD). Low complexity predominate over residues 1271–1284 (RPGAEGEPGAMGPQ). 2 stretches are compositionally biased toward pro residues: residues 1286-1302 (RPGPPGHVGPPGPPGQP) and 1330-1342 (QPGPPGHPGPPGE). Positions 1369 to 1378 (DPGAAGQKGQ) are enriched in low complexity. Residues 1386–1395 (GMPGGPGKSG) show a composition bias toward gly residues. Positions 1420 to 1429 (SPGLPGVPGS) are enriched in low complexity. The interval 1434-1472 (VNYDEIKRFIRQEIIKMFDERMAYYTSRMQFPMEMAAAP) is nonhelical region 2 (NC2). 2 Collagen-like domains span residues 1472–1524 (PGRP…GDIG) and 1528–1576 (AGEN…GKAG). Residues 1473–1578 (GRPGPPGKDG…MGQPGKAGHC (106 aa)) form a triple-helical region 1 (COL1) with 2 imperfections region. Residues 1579–1604 (NPSDCFGAMPMEQQYPPMKTMKGPFG) are nonhelical region 1 (NC1).

Belongs to the fibril-associated collagens with interrupted helices (FACIT) family. In terms of assembly, homotrimer. Interacts with FBN1, fibronectin and integrins ITGA1/ITGB1 and ITGA2/ITGB1. Integrin ITGA1/ITGB1 binds to a unique site within COL16A1 located close to its C-terminal end between collagenous domains COL1-COL3. Prolines at the third position of the tripeptide repeating unit (G-X-Y) are hydroxylated in some or all of the chains. Post-translationally, glycosylated. In papillary dermis, is a component of specialized fibrillin-1-containing microfibrils, whereas in territorial cartilage matrix, it is localized to a discrete population of thin, weakly banded collagen fibrils in association with other collagens (at protein level). In the placenta, where it is found in the amnion, a membranous tissue lining the amniotic cavity. Within the amnion, it is found in an acellular, relatively dense layer of a complex network of reticular fibers. Also located to a fibroblast layer beneath this dense layer. Exists in tissues in association with other types of collagen.

Its subcellular location is the secreted. The protein localises to the extracellular space. It localises to the extracellular matrix. Functionally, involved in mediating cell attachment and inducing integrin-mediated cellular reactions, such as cell spreading and alterations in cell morphology. In Homo sapiens (Human), this protein is Collagen alpha-1(XVI) chain (COL16A1).